Consider the following 398-residue polypeptide: MNEQSPALRNFTINFGPQHPAAHGVLRLVLELDGEVVERVDPHIGLLHRGTEKLIETKTYLQAMPYFDRLDYVAPMNQEHAFCLAAERLLGIEVPRRGQLIRVLYSEIGRLLSHLLNVTTQAMDVGALTPPLWGFEEREKLMVFYERASGSRMHANYFRIGGVHQDLPPKLVDDIDAFCDPFLKVVDDLDQLLTGNRIFKQRNVDIGVVTLKQAWEWGFSGVMVRGSGAAWDLRKSQPYDVYAEMEFDIPIGKNGDCYDRYLIRMEEMRQSVRIMKQCIAKLRAPDGQGPVLITDNKIAPPRRGEMKRSMEALIHHFKLYTEGVHVPAGEIYAAVEAPKGEFGVYLVADGTNKPYKCKIRAPGFAHLQAMDFLCRGHLLADVSAILGSLDIVFGEVDR.

Belongs to the complex I 49 kDa subunit family. In terms of assembly, NDH-1 is composed of 14 different subunits. Subunits NuoB, C, D, E, F, and G constitute the peripheral sector of the complex.

The protein resides in the cell inner membrane. The enzyme catalyses a quinone + NADH + 5 H(+)(in) = a quinol + NAD(+) + 4 H(+)(out). Functionally, NDH-1 shuttles electrons from NADH, via FMN and iron-sulfur (Fe-S) centers, to quinones in the respiratory chain. The immediate electron acceptor for the enzyme in this species is believed to be ubiquinone. Couples the redox reaction to proton translocation (for every two electrons transferred, four hydrogen ions are translocated across the cytoplasmic membrane), and thus conserves the redox energy in a proton gradient. The protein is NADH-quinone oxidoreductase subunit D of Bradyrhizobium sp. (strain ORS 278).